A 104-amino-acid polypeptide reads, in one-letter code: MENVQEVREQLLSVLAGLDVLVGSTINTKFSSKEVQTIVLNELSAKLRKEIMGLVMLMLQTDEEAAEFADGLDLGISLEKKRQHWHDIGQSIYISHERSLGIEI.

This is an uncharacterized protein from Acidithiobacillus ferridurans.